The primary structure comprises 817 residues: E3 ubiquitin-protein ligase TRIM9 (817 aa).

The RING-type zinc finger occupies 10-50 (CPVCGSFYREPIILPCSHNLCQACARNILVQTPESESPQSR). Thr41 carries the phosphothreonine modification. Phosphoserine is present on residues Ser44, Ser46, Ser49, and Ser53. 2 B box-type zinc fingers span residues 163-212 (AAAL…LVPP) and 224-266 (RKVS…VKAL). Cys168, Cys171, Cys193, His198, Cys229, His232, Cys252, and His258 together coordinate Zn(2+). The stretch at 273–340 (HKSQLSQALN…KAQLLARVNK (68 aa)) forms a coiled coil. The 59-residue stretch at 374–432 (IKENDPSGFLQISDALIRRVHLTEDQWGKGTLTPRMTTDFDLSLDNSPLLQSIHQLDFV) folds into the COS domain. The region spanning 440–535 (VPATPILQLE…KTLVLQTSEA (96 aa)) is the Fibronectin type-III domain. The tract at residues 535–557 (AAGAHETKPMKDTDSEEQTLPFP) is disordered. Residues 537–547 (GAHETKPMKDT) are compositionally biased toward basic and acidic residues. The 182-residue stretch at 613–794 (ETQSASYSQL…VQVSLWAPGL (182 aa)) folds into the B30.2/SPRY domain.

This sequence belongs to the TRIM/RBCC family. In terms of assembly, interacts with SNAP25. In terms of processing, auto-ubiquitinated. In terms of tissue distribution, brain. Expression is higher in the cerebral cortex and hippocampus (at protein level). Its expression is mainly confined to the central nervous system. The developing neocortex, the dorsal thalamus, the midbrain, the basal area of the hindbrain and spinal cord show high level of expression during embryogenesis. In adult brain, it is detected in the Purkinje cells of the cerebellum, in the hippocampus, and in the cortex.

The protein resides in the cytoplasm. It localises to the cell projection. Its subcellular location is the dendrite. The protein localises to the cytoplasmic vesicle. It is found in the secretory vesicle. The protein resides in the synaptic vesicle. It localises to the synapse. Its subcellular location is the cytoskeleton. The catalysed reaction is S-ubiquitinyl-[E2 ubiquitin-conjugating enzyme]-L-cysteine + [acceptor protein]-L-lysine = [E2 ubiquitin-conjugating enzyme]-L-cysteine + N(6)-ubiquitinyl-[acceptor protein]-L-lysine.. Its pathway is protein modification; protein ubiquitination. In terms of biological role, E3 ubiquitin-protein ligase which ubiquitinates itself in cooperation with an E2 enzyme UBE2D2/UBC4 and serves as a targeting signal for proteasomal degradation. May play a role in regulation of neuronal functions. May act as a regulator of synaptic vesicle exocytosis by controlling the availability of SNAP25 for the SNARE complex formation. The protein is E3 ubiquitin-protein ligase TRIM9 (Trim9) of Mus musculus (Mouse).